A 257-amino-acid chain; its full sequence is Phosphomannomutase (257 aa).

Asp19 (nucleophile) is an active-site residue. Mg(2+) is bound by residues Asp19 and Asp21. The active-site Proton donor/acceptor is the Asp21. 6 residues coordinate alpha-D-mannose 1-phosphate: Arg28, Arg133, Arg144, Arg151, Ser189, and Asp191. Mg(2+) contacts are provided by Asp219, Phe231, Asp233, and Thr236.

This sequence belongs to the eukaryotic PMM family. Homodimer.

It localises to the cytoplasm. It catalyses the reaction alpha-D-mannose 1-phosphate = D-mannose 6-phosphate. Its pathway is nucleotide-sugar biosynthesis; GDP-alpha-D-mannose biosynthesis; alpha-D-mannose 1-phosphate from D-fructose 6-phosphate: step 2/2. Functionally, involved in the synthesis of the GDP-mannose and dolichol-phosphate-mannose required for a number of critical mannosyl transfer reactions. This chain is Phosphomannomutase (pmm1), found in Schizosaccharomyces pombe (strain 972 / ATCC 24843) (Fission yeast).